Reading from the N-terminus, the 51-residue chain is Defensin-like protein 1 (51 aa).

At Gln1 the chain carries Pyrrolidone carboxylic acid. 4 disulfides stabilise this stretch: Cys4–Cys51, Cys15–Cys36, Cys21–Cys45, and Cys25–Cys47.

As to quaternary structure, forms oligomers in its native state.

In terms of biological role, possesses antifungal activity sensitive to inorganic cations. The polypeptide is Defensin-like protein 1 (Sinapis alba (White mustard)).